A 381-amino-acid chain; its full sequence is MATHLFTSESVSEGHPDKIADQISDAVLDAILEQDPRARVACETYVKTGMVLVGGEVTTSAWVDIEELTRNTVKEIGYTHSDMGFDADSCAVLNAIGKQSPDINQGVDRASLEEQGAGDQGLMFGYASDETDVLMPAPITYSHRLVQKQAEVRKSGKLDWLRPDAKSQITFKYENDKPVGIDAVVLSTQHCDSVSTETVREAVMEEIIKPVLPSEWIDGNTRFHINPTGRFVIGGPMGDCGLTGRKIIVDTYGGMARHGGGAFSGKDPSKVDRSAAYAGRYVAKNIVAAGLAKRCEIQVSYAIGVAEPTSISIDTFGTGVVDEKTLVALVREHFDLRPYGLIQMLDLERPIYRPTAAYGHFGRDEFPWEATDKAQALKASL.

H15 is a binding site for ATP. D17 contributes to the Mg(2+) binding site. E43 provides a ligand contact to K(+). L-methionine-binding residues include E56 and Q99. Residues 99 to 109 (QSPDINQGVDR) form a flexible loop region. ATP contacts are provided by residues 164–166 (DAK), 230–231 (RF), D239, 245–246 (RK), A262, and K266. D239 contacts L-methionine. K270 is an L-methionine binding site.

It belongs to the AdoMet synthase family. As to quaternary structure, homotetramer; dimer of dimers. Mg(2+) serves as cofactor. Requires K(+) as cofactor.

The protein resides in the cytoplasm. It catalyses the reaction L-methionine + ATP + H2O = S-adenosyl-L-methionine + phosphate + diphosphate. It functions in the pathway amino-acid biosynthesis; S-adenosyl-L-methionine biosynthesis; S-adenosyl-L-methionine from L-methionine: step 1/1. Catalyzes the formation of S-adenosylmethionine (AdoMet) from methionine and ATP. The overall synthetic reaction is composed of two sequential steps, AdoMet formation and the subsequent tripolyphosphate hydrolysis which occurs prior to release of AdoMet from the enzyme. The chain is S-adenosylmethionine synthase from Alteromonas mediterranea (strain DSM 17117 / CIP 110805 / LMG 28347 / Deep ecotype).